A 178-amino-acid polypeptide reads, in one-letter code: MELENFKGQNKNELSMIEVAHAILAKSGEPMAFVDLANAVQSYLDKTDEEFRNRLSQFYTDLNVDGSFISLGENTWGLRTWYPFESIDEALIHAEDEDEDRPVRKKRKKVNAFLADAADDDDVIDYDSDDPEDEEVEAEDTTSDDAPAFEDLSNDDDTDVLPDGIEGQLSELNEDDEN.

The HTH HARE-type domain occupies 14-81; it reads LSMIEVAHAI…GENTWGLRTW (68 aa). Residues 120 to 143 are compositionally biased toward acidic residues; sequence DDDVIDYDSDDPEDEEVEAEDTTS. A disordered region spans residues 120-178; that stretch reads DDDVIDYDSDDPEDEEVEAEDTTSDDAPAFEDLSNDDDTDVLPDGIEGQLSELNEDDEN.

The protein belongs to the RpoE family. RNAP is composed of a core of 2 alpha, a beta and a beta' subunits. The core is associated with a delta subunit and one of several sigma factors.

In terms of biological role, participates in both the initiation and recycling phases of transcription. In the presence of the delta subunit, RNAP displays an increased specificity of transcription, a decreased affinity for nucleic acids, and an increased efficiency of RNA synthesis because of enhanced recycling. This chain is Probable DNA-directed RNA polymerase subunit delta, found in Pediococcus pentosaceus (strain ATCC 25745 / CCUG 21536 / LMG 10740 / 183-1w).